A 292-amino-acid polypeptide reads, in one-letter code: MNEVKCVFETKLSPGDVAKLNKIVGAVVPVARCTPLISPRDVGLHKHVSHRTDYGKLHMALNMMYPTVFRKLEGNQMVMTPMQHGNIYTIRNTGPFSWEVGDRLAIIPPVFSVEHTTIMQTPSWDLMLPIIVPVQVAKEINIRNLVLTLMSLNRPGRDVELSQEVRRIHFRDVTIDIPATLDTRQLNSVRNVCLALALITNVAPSLLQQYVPRLALAETDMLLVKCYDLLKKLDLPGDGNGGEPPNIPNEIQRMSGLLNLITYVSSIVTENSLFIVNDITPDNKMATCTFTL.

It belongs to the herpesviridae TRX2 protein family. As to quaternary structure, interacts with TRX1 and major capisd protein/MCP.

The protein localises to the virion. It localises to the host nucleus. Its function is as follows. Structural component of the T=16 icosahedral capsid. The capsid is composed of pentamers and hexamers of major capsid protein/MCP, which are linked together by heterotrimers called triplexes. These triplexes are formed by a single molecule of triplex protein 1/TRX1 and two copies of triplex protein 2/TRX2. Additionally, TRX1 is required for efficient transport of TRX2 to the nucleus, which is the site of capsid assembly. This is Triplex capsid protein 2 from Elephas maximus (Indian elephant).